Consider the following 339-residue polypeptide: D-erythrose-4-phosphate dehydrogenase (339 aa).

NAD(+) contacts are provided by residues 12 to 13 (RI) and R81. Residues 154–156 (SCT), R200, 213–214 (TK), and R236 each bind substrate. Catalysis depends on C155, which acts as the Nucleophile. N318 provides a ligand contact to NAD(+).

This sequence belongs to the glyceraldehyde-3-phosphate dehydrogenase family. Epd subfamily. In terms of assembly, homotetramer.

The protein localises to the cytoplasm. The catalysed reaction is D-erythrose 4-phosphate + NAD(+) + H2O = 4-phospho-D-erythronate + NADH + 2 H(+). It functions in the pathway cofactor biosynthesis; pyridoxine 5'-phosphate biosynthesis; pyridoxine 5'-phosphate from D-erythrose 4-phosphate: step 1/5. In terms of biological role, catalyzes the NAD-dependent conversion of D-erythrose 4-phosphate to 4-phosphoerythronate. The sequence is that of D-erythrose-4-phosphate dehydrogenase from Shigella dysenteriae serotype 1 (strain Sd197).